The chain runs to 273 residues: 1,4-dihydroxy-2-naphthoyl-CoA synthase (273 aa).

Residues arginine 34, serine 73 to glutamine 77, tyrosine 85, tyrosine 117 to glycine 121, threonine 143, serine 149, tyrosine 246, and lysine 261 contribute to the substrate site. Glutamine 142–glycine 144 is a binding site for hydrogencarbonate. Residues glycine 254–aspartate 265 are compositionally biased toward basic and acidic residues. Positions glycine 254 to proline 273 are disordered.

Belongs to the enoyl-CoA hydratase/isomerase family. MenB subfamily. Requires hydrogencarbonate as cofactor.

It carries out the reaction 2-succinylbenzoyl-CoA + H(+) = 1,4-dihydroxy-2-naphthoyl-CoA + H2O. It participates in quinol/quinone metabolism; 1,4-dihydroxy-2-naphthoate biosynthesis; 1,4-dihydroxy-2-naphthoate from chorismate: step 6/7. The protein operates within quinol/quinone metabolism; menaquinone biosynthesis. Functionally, converts o-succinylbenzoyl-CoA (OSB-CoA) to 1,4-dihydroxy-2-naphthoyl-CoA (DHNA-CoA). This chain is 1,4-dihydroxy-2-naphthoyl-CoA synthase, found in Staphylococcus aureus (strain MSSA476).